We begin with the raw amino-acid sequence, 566 residues long: Serine/threonine-protein kinase ppk14 (566 aa).

Residues 1–31 (MNELHDGESSEEGRINVEDHLEEAKKDDTGH) are compositionally biased toward basic and acidic residues. Disordered stretches follow at residues 1-39 (MNELHDGESSEEGRINVEDHLEEAKKDDTGHWKHSGTAK) and 60-152 (SRKK…EKLK). Positions 74-85 (AANQSPSGAPES) are enriched in polar residues. A compositionally biased stretch (basic residues) spans 119 to 129 (SFFKSGRKKKD). Positions 134–145 (RNVSRSNGADTS) are enriched in polar residues. In terms of domain architecture, Protein kinase spans 195–485 (FEKVFLLGKG…AADVKLHPFF (291 aa)). ATP contacts are provided by residues 201 to 209 (LGKGDVGRV) and lysine 224. Aspartate 320 acts as the Proton acceptor in catalysis. The residue at position 379 (threonine 379) is a Phosphothreonine. Serine 381 is modified (phosphoserine). A Phosphothreonine modification is found at threonine 385.

This sequence belongs to the protein kinase superfamily. Ser/Thr protein kinase family. KIN82 subfamily.

The catalysed reaction is L-seryl-[protein] + ATP = O-phospho-L-seryl-[protein] + ADP + H(+). The enzyme catalyses L-threonyl-[protein] + ATP = O-phospho-L-threonyl-[protein] + ADP + H(+). This is Serine/threonine-protein kinase ppk14 (ppk14) from Schizosaccharomyces pombe (strain 972 / ATCC 24843) (Fission yeast).